A 367-amino-acid chain; its full sequence is DNA replication and repair protein RecF (367 aa).

31-38 (GENGSGKT) contributes to the ATP binding site.

Belongs to the RecF family.

It localises to the cytoplasm. In terms of biological role, the RecF protein is involved in DNA metabolism; it is required for DNA replication and normal SOS inducibility. RecF binds preferentially to single-stranded, linear DNA. It also seems to bind ATP. The chain is DNA replication and repair protein RecF from Saccharophagus degradans (strain 2-40 / ATCC 43961 / DSM 17024).